A 436-amino-acid chain; its full sequence is Small ribosomal subunit protein uS5m (436 aa).

Positions 152–218 constitute an S5 DRBM domain; sequence FETYCLEVKR…GMASRKLFHV (67 aa). The segment at 417 to 436 is disordered; the sequence is GVEPMPLGIGLSHVVPKKDD.

It belongs to the universal ribosomal protein uS5 family. In terms of assembly, component of the mitochondrial ribosome small subunit (28S) which comprises a 12S rRNA and about 30 distinct proteins.

The protein resides in the mitochondrion. The polypeptide is Small ribosomal subunit protein uS5m (mrps-5) (Caenorhabditis elegans).